Here is a 147-residue protein sequence, read N- to C-terminus: Spermidine export protein MdtJ (147 aa).

Transmembrane regions (helical) follow at residues 1–21 (MIYW…TLSM), 31–51 (TGHI…SLAV), 54–74 (VALG…ITIF), and 81–101 (ETLS…ILLV). A compositionally biased stretch (basic residues) spans 105-117 (TRKPKQPNRHRGN). The segment at 105–147 (TRKPKQPNRHRGNRPPSVQGLKTQTTGHHKGVAVESGEHHAAA) is disordered.

It belongs to the drug/metabolite transporter (DMT) superfamily. Small multidrug resistance (SMR) (TC 2.A.7.1) family. MdtJ subfamily. Forms a complex with MdtI.

The protein resides in the cell inner membrane. Catalyzes the excretion of spermidine. In Yersinia pseudotuberculosis serotype O:3 (strain YPIII), this protein is Spermidine export protein MdtJ.